Reading from the N-terminus, the 176-residue chain is RNA pyrophosphohydrolase (176 aa).

Positions 6–149 (GYRPNVGIVI…KRDVYRRVMK (144 aa)) constitute a Nudix hydrolase domain. A Nudix box motif is present at residues 38–59 (GGINPGESAEQAMYRELFEEVG).

It belongs to the Nudix hydrolase family. RppH subfamily. It depends on a divalent metal cation as a cofactor.

In terms of biological role, accelerates the degradation of transcripts by removing pyrophosphate from the 5'-end of triphosphorylated RNA, leading to a more labile monophosphorylated state that can stimulate subsequent ribonuclease cleavage. This is RNA pyrophosphohydrolase from Shigella dysenteriae serotype 1 (strain Sd197).